Reading from the N-terminus, the 1501-residue chain is Opaque-specific ABC transporter CDR3 (1501 aa).

Residues 1–502 (MAKTSQAEGQ…KRYWDRMRGD (502 aa)) are Cytoplasmic-facing. Residues 58–87 (TYTTATMHPNGINPISDKTDPTLDPESPSF) form a disordered region. An ABC transporter 1 domain is found at 140–395 (KYARNIFNKF…FKKMGFVCQD (256 aa)). The chain crosses the membrane as a helical span at residues 503 to 523 (IIVPLSTVAGNIAMALILSSV). Residue N530 is glycosylated (N-linked (GlcNAc...) asparagine). Helical transmembrane passes span 540-560 (VMYYALLFNAYSSVLEIYNMY), 589-609 (FPLKVVCSVLFNLILYFMVNF), 614-634 (GAFFFYLLISFCSTLFMSHLF), 653-673 (LLLFALSTFSGFAIPVTYMLG), and 755-775 (FGVLMAFIIFLFGTTIFFVQT). The Cytoplasmic segment spans residues 776 to 1175 (NKSSISKGET…LFQQYWRTPS (400 aa)). Positions 840-1083 (FHWRNLTYTV…LIEYFERNGA (244 aa)) constitute an ABC transporter 2 domain. 876 to 883 (GASGAGKT) is an ATP binding site. Helical transmembrane passes span 1176 to 1196 (YIYSKFAMAVLCSLFNGFTYY), 1212 to 1232 (IFSMFVVLTTLAQQYVPLFVT), 1261 to 1281 (IPYQVLAATISFFSWYYPVGL), 1297 to 1317 (LMWLIMTLMFIYSSTLAQFCI), 1325 to 1345 (YAANWISLLLTISMIFCGVIA), 1353 to 1375 (FWVFLYRCTPLTYLTSAMMSIGL), and 1451 to 1471 (GIFIVFIVFNMAATVFSYWLF).

The protein belongs to the ABC transporter superfamily. ABCG family. PDR (TC 3.A.1.205) subfamily.

The protein resides in the membrane. In Candida albicans (Yeast), this protein is Opaque-specific ABC transporter CDR3 (CDR3).